The following is a 514-amino-acid chain: Ankyrin repeat domain-containing protein 34B (514 aa).

ANK repeat units lie at residues 9–38 (SEGN…YINE), 42–79 (RGET…DPNI), 83–113 (SGKT…DLSL), and 117–146 (SSYS…AKGK). The segment at 220–249 (NDDTWDPGSPVRKPALAPKGPKLPHAPPWV) is disordered. At Ser263 the chain carries Phosphoserine. The residue at position 272 (Thr272) is a Phosphothreonine. Ser296 is subject to Phosphoserine.

It belongs to the ANKRD34 family. In terms of processing, phosphorylated.

The protein resides in the cytoplasm. It is found in the nucleus. The sequence is that of Ankyrin repeat domain-containing protein 34B (ANKRD34B) from Homo sapiens (Human).